The sequence spans 465 residues: Cysteine--tRNA ligase (465 aa).

Residue Cys28 participates in Zn(2+) binding. The 'HIGH' region signature appears at 30-40 (MTVYDYCHLGH). Residues Cys209, His234, and Glu238 each coordinate Zn(2+). Residues 266–270 (KMSKS) carry the 'KMSKS' region motif. Residue Lys269 participates in ATP binding.

It belongs to the class-I aminoacyl-tRNA synthetase family. In terms of assembly, monomer. Zn(2+) is required as a cofactor.

The protein resides in the cytoplasm. The catalysed reaction is tRNA(Cys) + L-cysteine + ATP = L-cysteinyl-tRNA(Cys) + AMP + diphosphate. The protein is Cysteine--tRNA ligase of Nitrosomonas europaea (strain ATCC 19718 / CIP 103999 / KCTC 2705 / NBRC 14298).